The primary structure comprises 471 residues: Tyrosine--tRNA ligase, mitochondrial (471 aa).

An L-tyrosine-binding site is contributed by Tyr-71. Asp-75 contributes to the ATP binding site. Positions 76-85 (PTGDSLHVGH) match the 'HIGH' region motif. L-tyrosine contacts are provided by Asp-115, Tyr-215, Gln-219, Asp-222, and Gln-241. Residues Ile-268 and Lys-278 each coordinate ATP. The 'KMSKS' region motif lies at 275–279 (KLGKS). N6-acetyllysine occurs at positions 349 and 361.

Belongs to the class-I aminoacyl-tRNA synthetase family. In terms of assembly, homodimer.

It is found in the mitochondrion matrix. It carries out the reaction tRNA(Tyr) + L-tyrosine + ATP = L-tyrosyl-tRNA(Tyr) + AMP + diphosphate + H(+). Functionally, catalyzes the attachment of tyrosine to tRNA(Tyr) in a two-step reaction: tyrosine is first activated by ATP to form Tyr-AMP and then transferred to the acceptor end of tRNA(Tyr). The sequence is that of Tyrosine--tRNA ligase, mitochondrial (Yars2) from Rattus norvegicus (Rat).